Here is a 314-residue protein sequence, read N- to C-terminus: tRNA dimethylallyltransferase (314 aa).

12–19 (GPTASGKT) is a binding site for ATP. Position 14–19 (14–19 (TASGKT)) interacts with substrate. 2 interaction with substrate tRNA regions span residues 37 to 40 (DSAQ) and 161 to 165 (QRIQR).

The protein belongs to the IPP transferase family. As to quaternary structure, monomer. Mg(2+) is required as a cofactor.

It carries out the reaction adenosine(37) in tRNA + dimethylallyl diphosphate = N(6)-dimethylallyladenosine(37) in tRNA + diphosphate. In terms of biological role, catalyzes the transfer of a dimethylallyl group onto the adenine at position 37 in tRNAs that read codons beginning with uridine, leading to the formation of N6-(dimethylallyl)adenosine (i(6)A). This chain is tRNA dimethylallyltransferase, found in Nitrosococcus oceani (strain ATCC 19707 / BCRC 17464 / JCM 30415 / NCIMB 11848 / C-107).